A 523-amino-acid polypeptide reads, in one-letter code: L-tyrosine:2-oxoglutarate aminotransferase ucdG (523 aa).

It belongs to the class-I pyridoxal-phosphate-dependent aminotransferase family. In terms of assembly, homodimer. Requires pyridoxal 5'-phosphate as cofactor.

It is found in the cytoplasm. The catalysed reaction is L-tyrosine + 2-oxoglutarate = 3-(4-hydroxyphenyl)pyruvate + L-glutamate. The protein operates within secondary metabolite biosynthesis. Nonribosomal peptide synthetase that mediates the biosynthesis of usterphenyllins and uscandidusins, p-terphenyl derivatives. Within the pathway, ucdG is probably involved in the conversion of L-tyrosine into 4-hydroxyphenylpyruvate (HPPA) as a precursor for the usterphenyllin and uscandidusin biosynthesis. UcdE further prenylates position C-14 of ring C of usterphenyllin B to form usterphenyllin A. The pathway begin with the biosynthesis of 4-hydroxyphenylpyruvate (HPPA) from L-tyrosine, possibly by the aminotransferase ucdG. The nonribosomal peptide synthetase ucdA then condenses two HPPA units to produce atromentin. The key step in this pathway is the reduction and dehydration of atromentin to form a terphenyl triol intermediate, performed by the NAD-dependent dehydrogenase ucdB. Further O-methylation by the methyltransferase ucdC forms terphenyllin carrying two methoxy moieties at C-9 and C-12, and subsequent dihydroxylation at C-3 of ring A and C-15 of ring C by the flavin-dependent oxygenase ucdD leads to 3,15-dihydroxyterphenyllin. Prenylation by ucdE at position C-5 of ring A forms usterphenyllin B, and is followed by a second prenylation at position C-14 of ring C to form usterphenyllin A. The following furan ring formation that leads to uscandidusins A and B was proven to be an unexpected spontaneous non-enzymatic reaction. In Aspergillus ustus, this protein is L-tyrosine:2-oxoglutarate aminotransferase ucdG.